The chain runs to 174 residues: Dual-action ribosomal maturation protein DarP (174 aa).

The protein belongs to the DarP family.

It localises to the cytoplasm. Member of a network of 50S ribosomal subunit biogenesis factors which assembles along the 30S-50S interface, preventing incorrect 23S rRNA structures from forming. Promotes peptidyl transferase center (PTC) maturation. This Pseudomonas paraeruginosa (strain DSM 24068 / PA7) (Pseudomonas aeruginosa (strain PA7)) protein is Dual-action ribosomal maturation protein DarP.